The sequence spans 402 residues: NADH-quinone oxidoreductase subunit D 2 (402 aa).

This sequence belongs to the complex I 49 kDa subunit family. As to quaternary structure, NDH-1 is composed of 14 different subunits. Subunits NuoB, C, D, E, F, and G constitute the peripheral sector of the complex.

It localises to the cell inner membrane. It carries out the reaction a quinone + NADH + 5 H(+)(in) = a quinol + NAD(+) + 4 H(+)(out). Functionally, NDH-1 shuttles electrons from NADH, via FMN and iron-sulfur (Fe-S) centers, to quinones in the respiratory chain. The immediate electron acceptor for the enzyme in this species is believed to be ubiquinone. Couples the redox reaction to proton translocation (for every two electrons transferred, four hydrogen ions are translocated across the cytoplasmic membrane), and thus conserves the redox energy in a proton gradient. The chain is NADH-quinone oxidoreductase subunit D 2 from Nitrobacter hamburgensis (strain DSM 10229 / NCIMB 13809 / X14).